Here is a 613-residue protein sequence, read N- to C-terminus: Penicillin-binding protein activator LpoA (613 aa).

The first 29 residues, M1–G29, serve as a signal peptide directing secretion. A lipid anchor (N-palmitoyl cysteine) is attached at C30. C30 carries the S-diacylglycerol cysteine lipid modification.

The protein belongs to the LpoA family. Interacts with PBP1a.

Its subcellular location is the cell outer membrane. Its function is as follows. Regulator of peptidoglycan synthesis that is essential for the function of penicillin-binding protein 1A (PBP1a). In Photobacterium profundum (strain SS9), this protein is Penicillin-binding protein activator LpoA.